A 218-amino-acid chain; its full sequence is Monomethylamine corrinoid protein 2 (218 aa).

The B12-binding N-terminal domain occupies 1 to 91 (MTNTEIFNKL…ELEKTKVEGE (91 aa)). The B12-binding domain occupies 94–218 (TGLAITFVAE…AAKVALNVMK (125 aa)). Histidine 107 is a binding site for methylcob(III)alamin.

This sequence belongs to the methylamine corrinoid protein family. In terms of assembly, can form a complex with MtmB.

It functions in the pathway one-carbon metabolism; methanogenesis from methylamine. Its function is as follows. Acts as a methyl group carrier between MtmB and MtbA. This Methanosarcina mazei (strain ATCC BAA-159 / DSM 3647 / Goe1 / Go1 / JCM 11833 / OCM 88) (Methanosarcina frisia) protein is Monomethylamine corrinoid protein 2 (mtmC2).